Consider the following 380-residue polypeptide: All-trans-retinol dehydrogenase [NAD(+)] ADH4 (380 aa).

Cysteine 47 is a binding site for Zn(2+). 48–49 is an NAD(+) binding site; sequence HT. 5 residues coordinate Zn(2+): histidine 69, cysteine 99, cysteine 102, cysteine 105, and cysteine 113. Position 121 is a phosphoserine (serine 121). Cysteine 180 contributes to the Zn(2+) binding site. Residues 205 to 210, aspartate 229, and lysine 234 contribute to the NAD(+) site; that span reads GLGGVG. Serine 278 carries the phosphoserine modification. Residues 298 to 300, 323 to 325, and arginine 375 each bind NAD(+); these read IGV and TFF.

It belongs to the zinc-containing alcohol dehydrogenase family. Class-II subfamily. Homodimer. It depends on Zn(2+) as a cofactor.

It is found in the cytoplasm. The enzyme catalyses all-trans-retinol + NAD(+) = all-trans-retinal + NADH + H(+). It catalyses the reaction 9-cis-retinol + NAD(+) = 9-cis-retinal + NADH + H(+). The catalysed reaction is 20-oxo-(5Z,8Z,11Z,14Z)-eicosatetraenoate + NAD(+) + H2O = (5Z,8Z,11Z,14Z)-eicosatetraenedioate + NADH + 2 H(+). It carries out the reaction 20-hydroxy-(5Z,8Z,11Z,14Z)-eicosatetraenoate + NAD(+) = 20-oxo-(5Z,8Z,11Z,14Z)-eicosatetraenoate + NADH + H(+). The enzyme catalyses 1,4-benzoquinone + NADH + H(+) = hydroquinone + NAD(+). Oxydation of 20-HETE is inhibited by low concentrations of N-heptylformamide. Oxydation of 20-HETE is a decreased by 55-65% by either all-trans-retinol or all-trans-retinoic acid. Strongly inhibited by omega-hydroxy fatty acids. Functionally, catalyzes the NAD-dependent oxidation of either all-trans-retinol or 9-cis-retinol. Also oxidizes long chain omega-hydroxy fatty acids, such as 20-HETE, producing both the intermediate aldehyde, 20-oxoarachidonate and the end product, a dicarboxylic acid, (5Z,8Z,11Z,14Z)-eicosatetraenedioate. Also catalyzes the reduction of benzoquinones. The protein is All-trans-retinol dehydrogenase [NAD(+)] ADH4 of Homo sapiens (Human).